Consider the following 176-residue polypeptide: NAD(P)H-quinone oxidoreductase subunit 6, chloroplastic (176 aa).

A run of 5 helical transmembrane segments spans residues 10 to 30, 32 to 52, 61 to 81, 92 to 112, and 152 to 172; these read FLLVFLGSGLILGGLGVVLLP, PIYSAFSLGLVLVCTSLFYIL, AQLLIYVGAINVLIIFAVMFM, LWTVGDGITSMVCISLFISLI, and FFLPFELISIILLVALIGAIA.

It belongs to the complex I subunit 6 family. As to quaternary structure, NDH is composed of at least 16 different subunits, 5 of which are encoded in the nucleus.

The protein localises to the plastid. It localises to the chloroplast thylakoid membrane. It catalyses the reaction a plastoquinone + NADH + (n+1) H(+)(in) = a plastoquinol + NAD(+) + n H(+)(out). The enzyme catalyses a plastoquinone + NADPH + (n+1) H(+)(in) = a plastoquinol + NADP(+) + n H(+)(out). NDH shuttles electrons from NAD(P)H:plastoquinone, via FMN and iron-sulfur (Fe-S) centers, to quinones in the photosynthetic chain and possibly in a chloroplast respiratory chain. The immediate electron acceptor for the enzyme in this species is believed to be plastoquinone. Couples the redox reaction to proton translocation, and thus conserves the redox energy in a proton gradient. The polypeptide is NAD(P)H-quinone oxidoreductase subunit 6, chloroplastic (ndhG) (Solanum lycopersicum (Tomato)).